Reading from the N-terminus, the 235-residue chain is Large ribosomal subunit protein uL3 (235 aa).

An N5-methylglutamine modification is found at Q151.

The protein belongs to the universal ribosomal protein uL3 family. In terms of assembly, part of the 50S ribosomal subunit. Forms a cluster with proteins L14 and L19. Post-translationally, methylated by PrmB.

One of the primary rRNA binding proteins, it binds directly near the 3'-end of the 23S rRNA, where it nucleates assembly of the 50S subunit. The chain is Large ribosomal subunit protein uL3 from Rhodospirillum rubrum (strain ATCC 11170 / ATH 1.1.1 / DSM 467 / LMG 4362 / NCIMB 8255 / S1).